The following is a 417-amino-acid chain: MSLSNKLTLDKLDVKGKRVVMRVDFNVPMKNNQITNNQRIKAAVPSIKFCLDNGAKSVVLMSHLGRPDGVPMPDKYSLEPVAVELKSLLGKDVLFLKDCVGPEVEKACANPAAGSVILLENLRFHVEEEGKGKDASGNKVKAEPAKIEAFRASLSKLGDVYVNDAFGTAHRAHSSMVGVNLPQKAGGFLMKKELNYFAKALESPERPFLAILGGAKVADKIQLINNMLDKVNEMIIGGGMAFTFLKVLNNMEIGTSLFDEEGAKIVKDLMSKAEKNGVKITLPVDFVTADKFDENAKTGQATVASGIPAGWMGLDCGPESSKKYAEAVTRAKQIVWNGPVGVFEWEAFARGTKALMDEVVKATSRGCITIIGGGDTATCCAKWNTEDKVSHVSTGGGASLELLEGKVLPGVDALSNI.

S2 carries the N-acetylserine modification. 2 positions are modified to phosphoserine: S2 and S4. K6 is subject to N6-succinyllysine. At K11 the chain carries N6-acetyllysine. (2R)-3-phosphoglycerate is bound by residues V23, D24, F25, N26, Q38, and R39. Residues 38 to 43 (QRIKAA) form a mitochondrial targeting region exposed following cis-trans isomerization by PIN1 and recognized by the TOM complex for mitochondrial translocation of the protein region. K48 bears the N6-acetyllysine; alternate mark. Residue K48 is modified to N6-succinyllysine; alternate. (2R)-3-phosphoglycerate is bound by residues S62, H63, G65, and R66. N6-acetyllysine is present on K75. At Y76 the chain carries Phosphotyrosine. 2 positions are modified to N6-acetyllysine: K86 and K91. K97 carries the post-translational modification N6-acetyllysine; alternate. K97 is subject to N6-(2-hydroxyisobutyryl)lysine; alternate. 2 residues coordinate (2R)-3-phosphoglycerate: L122 and R123. K131 carries the N6-acetyllysine; alternate modification. K131 is modified (N6-malonyllysine; alternate). Position 146 is an N6-acetyllysine (K146). H170 and R171 together coordinate (2R)-3-phosphoglycerate. K191 carries the post-translational modification N6-succinyllysine. Phosphotyrosine is present on Y196. K199 is modified (N6-acetyllysine). S203 carries the phosphoserine; by MAPK1 modification. G214 is an ADP binding site. A CDP-binding site is contributed by G214. Residues A215 and K216 each coordinate AMP. An ATP-binding site is contributed by A215. A215 is a binding site for Mg(2+). The residue at position 216 (K216) is an N6-(2-hydroxyisobutyryl)lysine. 2 residues coordinate Mg(2+): A218 and D219. D219 contacts CDP. K220 lines the AMP pocket. K220 provides a ligand contact to ATP. Position 220 is an N6-(2-hydroxyisobutyryl)lysine (K220). An ADP-binding site is contributed by G238. A CDP-binding site is contributed by G238. An AMP-binding site is contributed by G239. G239 lines the ATP pocket. N6-acetyllysine occurs at positions 267 and 291. Position 313 (G313) interacts with AMP. Residue G313 coordinates ATP. K323 is subject to N6-(2-hydroxyisobutyryl)lysine. Positions 338, 340, and 343 each coordinate CDP. F343 provides a ligand contact to ADP. E344 contacts AMP. E344 is a binding site for ATP. Residue K361 is modified to N6-acetyllysine. D375 and T376 together coordinate ATP. Residue D375 coordinates Mg(2+).

The protein belongs to the phosphoglycerate kinase family. As to quaternary structure, monomer. Interacts with kinase MAPK1/ERK2; the interaction is direct, occurs under hypoxic conditions, and promotes its interaction with PIN1. Interacts with peptidyl-prolyl cis-trans isomerase PIN1; the interaction is direct, occurs under hypoxic conditions, and targets the protein to the mitochondrion by promoting interactions with the TOM complex. Interacts with mitochondrial circRNA mcPGK1 (via its 2nd stem-loop); the interaction is direct and targets the protein to the mitochondrion by promoting interactions with the TOM complex. Interacts with pyruvate dehydrogenase kinase PDK1; the interaction is direct, occurs under hypoxic conditions and leads to PDK1-mediated inhibition of pyruvate dehydrogenase complex activity. It depends on Mg(2+) as a cofactor. In terms of processing, phosphorylated at Ser-203 by MAPK1/ERK2 under hypoxic conditions, which promotes its mitochondrial targeting. As to expression, mainly expressed in spermatogonia. Localized on the principle piece in the sperm (at protein level). Expression significantly decreased in the testis of elderly men.

The protein localises to the cytoplasm. It is found in the cytosol. The protein resides in the mitochondrion matrix. It carries out the reaction (2R)-3-phosphoglycerate + ATP = (2R)-3-phospho-glyceroyl phosphate + ADP. The enzyme catalyses L-seryl-[protein] + ATP = O-phospho-L-seryl-[protein] + ADP + H(+). It functions in the pathway carbohydrate degradation; glycolysis; pyruvate from D-glyceraldehyde 3-phosphate: step 2/5. Specifically inhibited by heterocyclic compound CBR-470-0. Its function is as follows. Catalyzes one of the two ATP producing reactions in the glycolytic pathway via the reversible conversion of 1,3-diphosphoglycerate to 3-phosphoglycerate. Both L- and D- forms of purine and pyrimidine nucleotides can be used as substrates, but the activity is much lower on pyrimidines. In addition to its role as a glycolytic enzyme, it seems that PGK1 acts as a polymerase alpha cofactor protein (primer recognition protein). Acts as a protein kinase when localized to the mitochondrion where it phosphorylates pyruvate dehydrogenase kinase PDK1 to inhibit pyruvate dehydrogenase complex activity and suppress the formation of acetyl-coenzyme A from pyruvate, and consequently inhibit oxidative phosphorylation and promote glycolysis. May play a role in sperm motility. The chain is Phosphoglycerate kinase 1 (PGK1) from Homo sapiens (Human).